We begin with the raw amino-acid sequence, 61 residues long: UPF0434 protein PSEEN1604 (61 aa).

This sequence belongs to the UPF0434 family.

This chain is UPF0434 protein PSEEN1604, found in Pseudomonas entomophila (strain L48).